The primary structure comprises 186 residues: Large ribosomal subunit protein uL5 (186 aa).

The protein belongs to the universal ribosomal protein uL5 family. As to quaternary structure, part of the 50S ribosomal subunit; contacts the 5S rRNA and probably tRNA. Forms a bridge to the 30S subunit in the 70S ribosome.

This is one of the proteins that bind and probably mediate the attachment of the 5S RNA into the large ribosomal subunit, where it forms part of the central protuberance. In the 70S ribosome it contacts protein S13 of the 30S subunit (bridge B1b), connecting the 2 subunits; this bridge is implicated in subunit movement. May contact the P site tRNA; the 5S rRNA and some of its associated proteins might help stabilize positioning of ribosome-bound tRNAs. This Pyrococcus furiosus (strain ATCC 43587 / DSM 3638 / JCM 8422 / Vc1) protein is Large ribosomal subunit protein uL5.